A 564-amino-acid chain; its full sequence is Dihydroxy-acid dehydratase (564 aa).

A [2Fe-2S] cluster-binding site is contributed by Cys55. Asp87 is a Mg(2+) binding site. Cys128 contributes to the [2Fe-2S] cluster binding site. Mg(2+)-binding residues include Asp129 and Lys130. Residue Lys130 is modified to N6-carboxylysine. [2Fe-2S] cluster is bound at residue Cys200. A Mg(2+)-binding site is contributed by Glu452. The Proton acceptor role is filled by Ser478.

The protein belongs to the IlvD/Edd family. In terms of assembly, homodimer. Requires [2Fe-2S] cluster as cofactor. Mg(2+) is required as a cofactor.

The enzyme catalyses (2R)-2,3-dihydroxy-3-methylbutanoate = 3-methyl-2-oxobutanoate + H2O. It catalyses the reaction (2R,3R)-2,3-dihydroxy-3-methylpentanoate = (S)-3-methyl-2-oxopentanoate + H2O. It participates in amino-acid biosynthesis; L-isoleucine biosynthesis; L-isoleucine from 2-oxobutanoate: step 3/4. The protein operates within amino-acid biosynthesis; L-valine biosynthesis; L-valine from pyruvate: step 3/4. Its function is as follows. Functions in the biosynthesis of branched-chain amino acids. Catalyzes the dehydration of (2R,3R)-2,3-dihydroxy-3-methylpentanoate (2,3-dihydroxy-3-methylvalerate) into 2-oxo-3-methylpentanoate (2-oxo-3-methylvalerate) and of (2R)-2,3-dihydroxy-3-methylbutanoate (2,3-dihydroxyisovalerate) into 2-oxo-3-methylbutanoate (2-oxoisovalerate), the penultimate precursor to L-isoleucine and L-valine, respectively. The protein is Dihydroxy-acid dehydratase of Polaromonas naphthalenivorans (strain CJ2).